Consider the following 598-residue polypeptide: MNELIKHKLELLPDSPGCYLHKDKEGTIIYVGKAKNLKKRVRSYFRGSHDTKTELLVSEIVDFEYIVTESDTEALLLEINLIQKNMPKYNIKLKDDKSYPFLKITNESFPRLVITRYIKKNDGLYFGPYPDSYTANEVKKLLDRIFPFKKCKNPINKVCFYYHLGQCCAHTICHTDKVYWDRLIDDVKHFLNGKDDKIIEDLRSKMLAASEEMAFERAAEYRDLISGIATMRTKQRVMSKDLQDRDIFGYYVDKGWMCVQVFFVRQGKLIQRDVNLFPYYNDAEEDFLTYMGQFYQDKQHFIPKEVFIPEAIDEELVAAIVPTKIIKPKRGEKKQLVALATKNARVSLQQKFDLLEKDIKKTSGAIENLGQLLKIDKPVRIEAFDNSNIQGTSPVAAMVVFVDGKPSKKDYRKFKIKTVVGPDDYASMREVLFRRYSRVKKEGLQAPNLIIVDGGVGQVNVAKDVIEKQLGLTIPVAGLQKNDKHQTHDLLFGNPLEVVPLPRRSEEFFLLHRIQDEVHRFAVTFHRQVRRKNSFSSTLDHISGLGPKRKQLLLRHFKTITAIASATSEEIQALGIPKTVVEAIQQQITDNKNDRSSP.

The region spanning 14–91 (DSPGCYLHKD…IQKNMPKYNI (78 aa)) is the GIY-YIG domain. A UVR domain is found at 196–231 (DKIIEDLRSKMLAASEEMAFERAAEYRDLISGIATM).

Belongs to the UvrC family. In terms of assembly, interacts with UvrB in an incision complex.

The protein localises to the cytoplasm. In terms of biological role, the UvrABC repair system catalyzes the recognition and processing of DNA lesions. UvrC both incises the 5' and 3' sides of the lesion. The N-terminal half is responsible for the 3' incision and the C-terminal half is responsible for the 5' incision. This chain is UvrABC system protein C, found in Streptococcus pyogenes serotype M3 (strain ATCC BAA-595 / MGAS315).